The sequence spans 141 residues: Galactose-6-phosphate isomerase subunit LacA 1 (141 aa).

It belongs to the LacAB/RpiB family. Heteromultimeric protein consisting of LacA and LacB.

It carries out the reaction aldehydo-D-galactose 6-phosphate = keto-D-tagatose 6-phosphate. The protein operates within carbohydrate metabolism; D-galactose 6-phosphate degradation; D-tagatose 6-phosphate from D-galactose 6-phosphate: step 1/1. The protein is Galactose-6-phosphate isomerase subunit LacA 1 of Streptococcus pyogenes serotype M18 (strain MGAS8232).